The chain runs to 135 residues: Large ribosomal subunit protein mL41 (135 aa).

The N-terminal 13 residues, 1-13 (MGFLTAVTQGLVR), are a transit peptide targeting the mitochondrion.

It belongs to the mitochondrion-specific ribosomal protein mL41 family. Component of the mitochondrial ribosome large subunit (39S) which comprises a 16S rRNA and about 50 distinct proteins. Interacts with BCL2.

It is found in the mitochondrion. Component of the mitochondrial ribosome large subunit. Also involved in apoptosis and cell cycle. Enhances p53/TP53 stability, thereby contributing to p53/TP53-induced apoptosis in response to growth-inhibitory condition. Enhances p53/TP53 translocation to the mitochondria. Has the ability to arrest the cell cycle at the G1 phase, possibly by stabilizing the CDKN1A and CDKN1B (p27Kip1) proteins. The protein is Large ribosomal subunit protein mL41 (Mrpl41) of Mus musculus (Mouse).